The chain runs to 86 residues: Secreted transmembrane peptide 6 (86 aa).

The signal sequence occupies residues 1–31; sequence MGMKSPNIAAFMLPLLLILFTLSSQLKVVES. The short motif at 45–58 is the SCOOP motif element; that stretch reads IVYTPPSRSCGTSP. Residues 51-53 carry the SxS motif essential for MIK2 binding motif; it reads SRS.

This sequence belongs to the serine rich endogenous peptide (SCOOP) phytocytokine family. Interacts with MIK2 (via extracellular leucine-rich repeat domain); this interaction triggers the formation of complex between MIK2 and the BAK1/SERK3 and SERK4 coreceptors, and subsequent BAK1 activation by phosphorylation. In terms of tissue distribution, mostly expressed in leaves, and, to a lower extent, in roots, stems, siliques, seeds and flowers.

It is found in the cell membrane. The protein localises to the secreted. It localises to the extracellular space. Its subcellular location is the apoplast. Brassicaceae-specific phytocytokine (plant endogenous peptide released into the apoplast) perceived by MIK2 in a BAK1/SERK3 and SERK4 coreceptors-dependent manner, that modulates various physiological and antimicrobial processes including growth prevention and reactive oxygen species (ROS) response regulation. Prevents general growth and development. This is Secreted transmembrane peptide 6 from Arabidopsis thaliana (Mouse-ear cress).